A 430-amino-acid chain; its full sequence is MFVDQVKINVKAGNGGNGIVAFRREKYVPNGGPAGGDGGRGGNVVLKVDPGLRTLMDFRYRHKFKADSGKNGMNKQMTGRSSQDLVISVPGGTIVRDLTTGRVIGDLTDNGQELVVAKGGRGGRGNMRFASPRNPAPEISENGEPGEEIELQLELKVLADVGLLGFPSVGKSTLLSVVTSAKPKIAEYHFTTLVPNLGMVQLDDGRDFVIADIPGLIEGASQGVGLGFEFLRHVERTRVLLHLVDMSGMTEEDPFTNFRQINEELKKYNPELLERRQIIVPTKMDLPGSDEELKKFEKQVRADERYADFEIFPISSITHNGLEKLVARTADVLEEIPQHSLIATSDEETEKTYEFSSEKDFTIENIDDVWVIEGEKIEKLFKMTDTTHDESLLRFARQMRGMGIDDELRRLGARNGDSVQILDFVFEFVE.

The Obg domain occupies 1 to 158 (MFVDQVKINV…IELQLELKVL (158 aa)). A disordered region spans residues 122–143 (GGRGNMRFASPRNPAPEISENG). Residues 159-334 (ADVGLLGFPS…LVARTADVLE (176 aa)) form the OBG-type G domain. Residues 165–172 (GFPSVGKS), 190–194 (FTTLV), 212–215 (DIPG), 282–285 (TKMD), and 315–317 (SSI) each bind GTP. Mg(2+) contacts are provided by Ser-172 and Thr-192. Residues 353-430 (YEFSSEKDFT…ILDFVFEFVE (78 aa)) enclose the OCT domain.

The protein belongs to the TRAFAC class OBG-HflX-like GTPase superfamily. OBG GTPase family. In terms of assembly, monomer. Mg(2+) is required as a cofactor.

The protein localises to the cytoplasm. Functionally, an essential GTPase which binds GTP, GDP and possibly (p)ppGpp with moderate affinity, with high nucleotide exchange rates and a fairly low GTP hydrolysis rate. Plays a role in control of the cell cycle, stress response, ribosome biogenesis and in those bacteria that undergo differentiation, in morphogenesis control. The chain is GTPase Obg from Pediococcus pentosaceus (strain ATCC 25745 / CCUG 21536 / LMG 10740 / 183-1w).